The chain runs to 671 residues: DNA ligase (671 aa).

Residues 32–36, 81–82, and Glu113 contribute to the NAD(+) site; these read DAEYD and SL. Residue Lys115 is the N6-AMP-lysine intermediate of the active site. Positions 136, 173, 290, and 314 each coordinate NAD(+). Zn(2+)-binding residues include Cys408, Cys411, Cys426, and Cys432. Residues 593–671 enclose the BRCT domain; sequence EIDSPFAGKT…EAEMMRLLGE (79 aa).

This sequence belongs to the NAD-dependent DNA ligase family. LigA subfamily. Mg(2+) serves as cofactor. Mn(2+) is required as a cofactor.

The enzyme catalyses NAD(+) + (deoxyribonucleotide)n-3'-hydroxyl + 5'-phospho-(deoxyribonucleotide)m = (deoxyribonucleotide)n+m + AMP + beta-nicotinamide D-nucleotide.. Its function is as follows. DNA ligase that catalyzes the formation of phosphodiester linkages between 5'-phosphoryl and 3'-hydroxyl groups in double-stranded DNA using NAD as a coenzyme and as the energy source for the reaction. It is essential for DNA replication and repair of damaged DNA. The chain is DNA ligase from Klebsiella pneumoniae (strain 342).